The primary structure comprises 487 residues: Protein nucleotidyltransferase YdiU (487 aa).

Residues glycine 90, glycine 92, arginine 93, lysine 113, aspartate 125, glycine 126, arginine 176, and arginine 183 each contribute to the ATP site. Aspartate 252 functions as the Proton acceptor in the catalytic mechanism. Residues asparagine 253 and aspartate 262 each coordinate Mg(2+). Aspartate 262 provides a ligand contact to ATP.

It belongs to the SELO family. It depends on Mg(2+) as a cofactor. Mn(2+) serves as cofactor.

The enzyme catalyses L-seryl-[protein] + ATP = 3-O-(5'-adenylyl)-L-seryl-[protein] + diphosphate. It catalyses the reaction L-threonyl-[protein] + ATP = 3-O-(5'-adenylyl)-L-threonyl-[protein] + diphosphate. The catalysed reaction is L-tyrosyl-[protein] + ATP = O-(5'-adenylyl)-L-tyrosyl-[protein] + diphosphate. It carries out the reaction L-histidyl-[protein] + UTP = N(tele)-(5'-uridylyl)-L-histidyl-[protein] + diphosphate. The enzyme catalyses L-seryl-[protein] + UTP = O-(5'-uridylyl)-L-seryl-[protein] + diphosphate. It catalyses the reaction L-tyrosyl-[protein] + UTP = O-(5'-uridylyl)-L-tyrosyl-[protein] + diphosphate. Functionally, nucleotidyltransferase involved in the post-translational modification of proteins. It can catalyze the addition of adenosine monophosphate (AMP) or uridine monophosphate (UMP) to a protein, resulting in modifications known as AMPylation and UMPylation. The protein is Protein nucleotidyltransferase YdiU of Pseudomonas savastanoi pv. phaseolicola (strain 1448A / Race 6) (Pseudomonas syringae pv. phaseolicola (strain 1448A / Race 6)).